Here is a 181-residue protein sequence, read N- to C-terminus: Large ribosomal subunit protein uL10 (181 aa).

It belongs to the universal ribosomal protein uL10 family. In terms of assembly, part of the ribosomal stalk of the 50S ribosomal subunit. The N-terminus interacts with L11 and the large rRNA to form the base of the stalk. The C-terminus forms an elongated spine to which L12 dimers bind in a sequential fashion forming a multimeric L10(L12)X complex.

Functionally, forms part of the ribosomal stalk, playing a central role in the interaction of the ribosome with GTP-bound translation factors. This is Large ribosomal subunit protein uL10 from Amoebophilus asiaticus (strain 5a2).